The primary structure comprises 260 residues: 2-oxo-tetronate isomerase (260 aa).

E143 functions as the Proton donor/acceptor in the catalytic mechanism. 4 residues coordinate Mg(2+): E143, D178, Q204, and E240. E240 acts as the Proton donor/acceptor in catalysis.

This sequence belongs to the hyi family. OtnI subfamily.

It carries out the reaction 2-dehydro-L-erythronate = 3-dehydro-L-erythronate. The enzyme catalyses 2-dehydro-D-erythronate = 3-dehydro-D-erythronate. In terms of biological role, catalyzes the isomerization of 2-oxo-tetronate to 3-oxo-tetronate. The protein is 2-oxo-tetronate isomerase of Cupriavidus necator (strain ATCC 17699 / DSM 428 / KCTC 22496 / NCIMB 10442 / H16 / Stanier 337) (Ralstonia eutropha).